The chain runs to 367 residues: Alanine racemase (367 aa).

K34 acts as the Proton acceptor; specific for D-alanine in catalysis. The residue at position 34 (K34) is an N6-(pyridoxal phosphate)lysine. R129 provides a ligand contact to substrate. Y251 functions as the Proton acceptor; specific for L-alanine in the catalytic mechanism. Substrate is bound at residue M299.

This sequence belongs to the alanine racemase family. Requires pyridoxal 5'-phosphate as cofactor.

The enzyme catalyses L-alanine = D-alanine. Its pathway is amino-acid biosynthesis; D-alanine biosynthesis; D-alanine from L-alanine: step 1/1. In terms of biological role, catalyzes the interconversion of L-alanine and D-alanine. May also act on other amino acids. The polypeptide is Alanine racemase (alr) (Thiobacillus denitrificans (strain ATCC 25259 / T1)).